The sequence spans 343 residues: Dihydroorotate dehydrogenase (quinone) (343 aa).

FMN contacts are provided by residues 61–65 (AGLDK) and T85. K65 serves as a coordination point for substrate. 110–114 (NRMGF) lines the substrate pocket. Positions 138 and 171 each coordinate FMN. A substrate-binding site is contributed by N171. Catalysis depends on S174, which acts as the Nucleophile. N176 is a binding site for substrate. Positions 216 and 244 each coordinate FMN. Residue 245–246 (NT) participates in substrate binding. Residues G267, G296, and 317–318 (YS) each bind FMN.

The protein belongs to the dihydroorotate dehydrogenase family. Type 2 subfamily. As to quaternary structure, monomer. FMN serves as cofactor.

It localises to the cell membrane. The enzyme catalyses (S)-dihydroorotate + a quinone = orotate + a quinol. The protein operates within pyrimidine metabolism; UMP biosynthesis via de novo pathway; orotate from (S)-dihydroorotate (quinone route): step 1/1. In terms of biological role, catalyzes the conversion of dihydroorotate to orotate with quinone as electron acceptor. The chain is Dihydroorotate dehydrogenase (quinone) from Pseudomonas savastanoi pv. phaseolicola (strain 1448A / Race 6) (Pseudomonas syringae pv. phaseolicola (strain 1448A / Race 6)).